The following is a 432-amino-acid chain: Glutamyl-tRNA reductase (432 aa).

Substrate contacts are provided by residues 49–52 (TCNR), Ser107, 112–114 (ETQ), and Gln118. Cys50 functions as the Nucleophile in the catalytic mechanism. 186–191 (GAGEMG) is an NADP(+) binding site.

Belongs to the glutamyl-tRNA reductase family. As to quaternary structure, homodimer.

It carries out the reaction (S)-4-amino-5-oxopentanoate + tRNA(Glu) + NADP(+) = L-glutamyl-tRNA(Glu) + NADPH + H(+). It participates in porphyrin-containing compound metabolism; protoporphyrin-IX biosynthesis; 5-aminolevulinate from L-glutamyl-tRNA(Glu): step 1/2. In terms of biological role, catalyzes the NADPH-dependent reduction of glutamyl-tRNA(Glu) to glutamate 1-semialdehyde (GSA). The polypeptide is Glutamyl-tRNA reductase (Campylobacter jejuni (strain RM1221)).